Consider the following 345-residue polypeptide: MKVAIIGATGYGGIELIRLLEQHPYFSIASLHSFSQVGECITNVYPHLRNVLFHTLQEIDVKTIGKEAEIVFLATPAGVSAELTPKLVAEGLKVIDLSGDFRMIDPSSYELWYKRPAAKEEILRKAVYGLSEWKRTEIQKANLIANPGCFATATLLAIAPLIRSGMIEEDSIIIDAKSGVSGAGKTPTTMTHFPELYDNLHIYKVNQHQHVPEIEQMLTEWNSESQPITFSTHLIPISRGIMITLYAKVKQKMEIKQLQKLYEETYEQSPFIRICTQGKFPSPKEVRGSNYCDIGIAYDERTERVTVVSVIDNMMKGAAGQAIQNANIIAGLEETTGLQHMPLYL.

C149 is a catalytic residue.

Belongs to the NAGSA dehydrogenase family. Type 1 subfamily.

It localises to the cytoplasm. The catalysed reaction is N-acetyl-L-glutamate 5-semialdehyde + phosphate + NADP(+) = N-acetyl-L-glutamyl 5-phosphate + NADPH + H(+). The protein operates within amino-acid biosynthesis; L-arginine biosynthesis; N(2)-acetyl-L-ornithine from L-glutamate: step 3/4. Its function is as follows. Catalyzes the NADPH-dependent reduction of N-acetyl-5-glutamyl phosphate to yield N-acetyl-L-glutamate 5-semialdehyde. The polypeptide is N-acetyl-gamma-glutamyl-phosphate reductase (Bacillus cereus (strain B4264)).